We begin with the raw amino-acid sequence, 379 residues long: Carbamoyl phosphate synthase small chain (379 aa).

Residues 1–183 form a CPSase region; the sequence is MTSQDRSEAV…EAYVVEPDGE (183 aa). 3 residues coordinate L-glutamine: Ser-51, Gly-235, and Gly-237. One can recognise a Glutamine amidotransferase type-1 domain in the interval 185-379; that stretch reads LYTVVAYDMG…FVELIQANKK (195 aa). Cys-263 functions as the Nucleophile in the catalytic mechanism. Residues Phe-264, Gln-267, Asn-305, Gly-307, and Phe-308 each coordinate L-glutamine. Catalysis depends on residues His-353 and Glu-355.

Belongs to the CarA family. Composed of two chains; the small (or glutamine) chain promotes the hydrolysis of glutamine to ammonia, which is used by the large (or ammonia) chain to synthesize carbamoyl phosphate. Tetramer of heterodimers (alpha,beta)4.

It catalyses the reaction hydrogencarbonate + L-glutamine + 2 ATP + H2O = carbamoyl phosphate + L-glutamate + 2 ADP + phosphate + 2 H(+). It carries out the reaction L-glutamine + H2O = L-glutamate + NH4(+). It functions in the pathway amino-acid biosynthesis; L-arginine biosynthesis; carbamoyl phosphate from bicarbonate: step 1/1. The protein operates within pyrimidine metabolism; UMP biosynthesis via de novo pathway; (S)-dihydroorotate from bicarbonate: step 1/3. In terms of biological role, small subunit of the glutamine-dependent carbamoyl phosphate synthetase (CPSase). CPSase catalyzes the formation of carbamoyl phosphate from the ammonia moiety of glutamine, carbonate, and phosphate donated by ATP, constituting the first step of 2 biosynthetic pathways, one leading to arginine and/or urea and the other to pyrimidine nucleotides. The small subunit (glutamine amidotransferase) binds and cleaves glutamine to supply the large subunit with the substrate ammonia. The polypeptide is Carbamoyl phosphate synthase small chain (Corynebacterium diphtheriae (strain ATCC 700971 / NCTC 13129 / Biotype gravis)).